The primary structure comprises 863 residues: Oleate activated transcription factor 3 (863 aa).

The segment at residues 19–47 is a DNA-binding region (zn(2)-C6 fungal-type); the sequence is CTNCKKRKSKCDRTKPCGTCVRLGDVDSC. The span at 52-63 shows a compositional bias: polar residues; it reads DSSGQPESSPSL. A disordered region spans residues 52–81; sequence DSSGQPESSPSLNDADPLRKQSTPAERISP.

This sequence belongs to the OAF3 family.

It localises to the cytoplasm. The protein resides in the nucleus. It is found in the mitochondrion. Transcriptional inhibitor with a significantly increased number of target genes in response to oleate. The sequence is that of Oleate activated transcription factor 3 (OAF3) from Saccharomyces cerevisiae (strain RM11-1a) (Baker's yeast).